Consider the following 470-residue polypeptide: mRNA export factor ICP27 homolog (470 aa).

Disordered regions lie at residues 1–31 and 62–204; these read MALSSVSSCEPMEDEMSIMGSDTEDNFTGGD and VGDP…DRLN. Over residues 71–85 the composition is skewed to polar residues; that stretch reads VSFSASPQRAQPSNP. Basic residues-rich tracts occupy residues 94 to 107 and 178 to 187; these read HGRRNRRRPFRRNN and RVHRNRRRGN. Residues Cys359, His437, Cys441, and Cys446 each contribute to the Zn(2+) site. The CHC2-type zinc finger occupies 359 to 446; sequence CYLSSSGSPT…HKRRCKADTC (88 aa).

The protein belongs to the HHV-1 ICP27 protein family. In terms of assembly, homodimer. Homodimerization is required for transactivation. Associates in a complex with RNA, and host export factors NXF1/TAP and ALYREF; these interactions allow nuclear export of viral transcripts. Interacts with three host shuttling SR proteins SRSF1, SRSF3 and SRSF7. Interacts with host SRPK1. Interacts with IE62; this interaction enhances IE62 transactivation.

The protein localises to the host cytoplasm. It localises to the host nucleus. In terms of biological role, multifunctional regulator of the expression of viral genes that mediates nuclear export of viral intronless mRNAs. This immediate early (EI) protein promotes the nuclear export of viral intronless mRNAs by interacting with mRNAs and host NXF1/TAP. The polypeptide is mRNA export factor ICP27 homolog (Equine herpesvirus 1 (strain Ab4p) (EHV-1)).